A 540-amino-acid polypeptide reads, in one-letter code: Fumonisin B1 esterase (540 aa).

Residue S240 is the Acyl-ester intermediate of the active site. Residues E356 and H448 each act as charge relay system in the active site. The segment at 521 to 540 is disordered; the sequence is QVGSGEGLGVSPSKACQPSK.

Belongs to the type-B carboxylesterase/lipase family.

It carries out the reaction fumonisin B1 + 2 H2O = 2 tricarballylate + (2S,3S,5R,10R,12S,14S,15R,16R)-2-amino-12,16-dimethylicosane-3,5,10,14,15-pentol + 2 H(+). Functionally, involved in degradation of fumonisin B1. Catalyzes the hydrolysis of fumonisin B1 (FB1) to aminopentol (HFB1). This chain is Fumonisin B1 esterase (fumD), found in Sphingopyxis macrogoltabida (Sphingomonas macrogoltabidus).